A 116-amino-acid chain; its full sequence is Spexin (116 aa).

The signal sequence occupies residues 1 to 26 (MKGFKSLVVMTLTLFLVFSFMGNCNS). Residues 27–35 (APQRLFERR) constitute a propeptide that is removed on maturation. Glutamine 49 is subject to Glutamine amide. 2 consecutive propeptides follow at residues 50–116 (GRRF…LLNW) and 74–116 (PNSQ…LLNW). A compositionally biased stretch (basic and acidic residues) spans 53–73 (FLSDQSRRKDLSDRPPLERRS). The tract at residues 53-80 (FLSDQSRRKDLSDRPPLERRSPNSQQLT) is disordered.

Belongs to the spexin family.

The protein localises to the secreted. It is found in the extracellular space. The protein resides in the cytoplasmic vesicle. Its subcellular location is the secretory vesicle. Plays a role as a central modulator of cardiovascular and renal function and nociception. Also plays a role in energy metabolism and storage. Inhibits adrenocortical cell proliferation with minor stimulation on corticosteroid release. Functionally, acts as a ligand for galanin receptors GALR2 and GALR3. Intracerebroventricular administration of the peptide induces an increase in arterial blood pressure, a decrease in both heart rate and renal excretion and delayed natriuresis. Intraventricular administration of the peptide induces antinociceptive activity. Also induces contraction of muscarinic-like stomach smooth muscles. Intraperitoneal administration of the peptide induces a reduction in food consumption and body weight. Inhibits long chain fatty acid uptake into adipocytes. Its function is as follows. Intracerebroventricular administration of the peptide induces a decrease in heart rate, but no change in arterial pressure, and an increase in urine flow rate. Intraventricular administration of the peptide induces antinociceptive activity. The sequence is that of Spexin (SPX) from Bos taurus (Bovine).